Consider the following 481-residue polypeptide: Glutamyl-tRNA(Gln) amidotransferase subunit A (481 aa).

Catalysis depends on charge relay system residues K75 and S150. The active-site Acyl-ester intermediate is S174.

The protein belongs to the amidase family. GatA subfamily. As to quaternary structure, heterotrimer of A, B and C subunits.

The enzyme catalyses L-glutamyl-tRNA(Gln) + L-glutamine + ATP + H2O = L-glutaminyl-tRNA(Gln) + L-glutamate + ADP + phosphate + H(+). In terms of biological role, allows the formation of correctly charged Gln-tRNA(Gln) through the transamidation of misacylated Glu-tRNA(Gln) in organisms which lack glutaminyl-tRNA synthetase. The reaction takes place in the presence of glutamine and ATP through an activated gamma-phospho-Glu-tRNA(Gln). In Macrococcus caseolyticus (strain JCSC5402) (Macrococcoides caseolyticum), this protein is Glutamyl-tRNA(Gln) amidotransferase subunit A.